A 1182-amino-acid polypeptide reads, in one-letter code: Tyrosine-protein kinase ABL2 (1182 aa).

The disordered stretch occupies residues 1–42 (MGQQVGRVGEAPGLQQPQPRGIRGSSAARPSGRRRDPAGRTA). Glycine 2 carries the N-myristoyl glycine lipid modification. A CAP region spans residues 2 to 106 (GQQVGRVGEA…SKENLLGATE (105 aa)). Positions 20-30 (RGIRGSSAARP) are enriched in low complexity. Position 97 is a phosphoserine (serine 97). One can recognise an SH3 domain in the interval 107–167 (SDPNLFVALY…PSNYITPVNS (61 aa)). Phosphotyrosine occurs at positions 116, 161, 174, 185, 218, and 231. An SH2 domain is found at 173–263 (WYHGPVSRSA…GLVTTLHYPA (91 aa)). Tyrosine 261 is modified (phosphotyrosine; by ABL1 and autocatalysis). Tyrosine 272 is subject to Phosphotyrosine; by autocatalysis. Serine 275 is subject to Phosphoserine. In terms of domain architecture, Protein kinase spans 288 to 539 (ITMKHKLGGG…PSFAETHQAF (252 aa)). 294–302 (LGGGQYGEV) provides a ligand contact to ATP. A phosphotyrosine mark is found at tyrosine 299 and tyrosine 303. Residues lysine 317 and 362–368 (EYMPYGN) contribute to the ATP site. The active-site Proton acceptor is the aspartate 409. Positions 427 to 451 (DFGLSRLMTGDTYTAHAGAKFPIKW) match the Kinase activation loop motif. Tyrosine 439 bears the Phosphotyrosine; by autocatalysis and SRC-type Tyr-kinases mark. A Phosphotyrosine modification is found at tyrosine 459. Position 568 is a phosphotyrosine; by autocatalysis (tyrosine 568). Phosphoserine occurs at positions 606, 621, 632, 634, and 656. 2 disordered regions span residues 612 to 642 (IRST…DAKE) and 655 to 674 (SSFM…SSFR). Positions 659–661 (KKR) match the Nuclear localization signal motif. Phosphoserine occurs at positions 670, 671, and 672. A Phosphotyrosine; by autocatalysis modification is found at tyrosine 684. Residues 695-930 (SLQNADGFSV…AVLPTTHNHK (236 aa)) form an F-actin-binding region. Tyrosine 719 bears the Phosphotyrosine mark. Residues 765 to 796 (LRAGKPTASDDTSKPFPRSNSTSSMSSGLPEQ) are disordered. Lysine 778 bears the N6-acetyllysine mark. Residues 782–793 (RSNSTSSMSSGL) are compositionally biased toward polar residues. The residue at position 785 (serine 785) is a Phosphoserine. Threonine 802 carries the post-translational modification Phosphothreonine. Positions 809 to 825 (RSKLQLERTVSTSSQPE) are enriched in polar residues. Positions 809-858 (RSKLQLERTVSTSSQPEENVDRANDMLPKKSEEGAAPARERPKAKLLPRG) are disordered. 2 positions are modified to phosphoserine: serine 819 and serine 822. Residues 827–851 (NVDRANDMLPKKSEEGAAPARERPK) show a composition bias toward basic and acidic residues. Residues serine 915 and serine 936 each carry the phosphoserine modification. The disordered stretch occupies residues 964–1059 (HQVTSSGDKD…TSSISPAKMA (96 aa)). Positions 1020–1182 (EGGKKAAPGP…VQEISDVVQR (163 aa)) are F-actin-binding.

Belongs to the protein kinase superfamily. Tyr protein kinase family. ABL subfamily. Interacts with PSMA7. Interacts with CTTN. Found in a complex with ABL1, ABL2, CRK and UNC119; leading to the inhibition of CRK phosphorylation by ABL kinases. Mg(2+) serves as cofactor. The cofactor is Mn(2+). Post-translationally, phosphorylated at Tyr-261 by ABL1 in response to oxidative stress. Phosphorylated by PDGFRB. In terms of processing, polyubiquitinated. Polyubiquitination of ABL2 leads to degradation. As to expression, most abundant in adult mouse brain, especially in synapse-rich regions.

It localises to the cytoplasm. It is found in the cytoskeleton. It catalyses the reaction L-tyrosyl-[protein] + ATP = O-phospho-L-tyrosyl-[protein] + ADP + H(+). With respect to regulation, stabilized in the inactive form by an association between the SH3 domain and the SH2-TK linker region, interactions of the N-terminal cap, and contributions from an N-terminal myristoyl group and phospholipids. Activated by autophosphorylation as well as by SRC-family kinase-mediated phosphorylation. Activated by RIN1 binding to the SH2 and SH3 domains. Inhibited by imatinib mesylate (Gleevec). Phosphatidylinositol 4,5-bisphosphate (PIP2), a highly abundant phosphoinositide known to regulate cytoskeletal and membrane proteins, inhibits the tyrosine kinase activity. Non-receptor tyrosine-protein kinase that plays an ABL1-overlapping role in key processes linked to cell growth and survival such as cytoskeleton remodeling in response to extracellular stimuli, cell motility and adhesion, receptor endocytosis, autophagy, DNA damage response and apoptosis. Coordinates actin remodeling through tyrosine phosphorylation of proteins controlling cytoskeleton dynamics like MYH10 (involved in movement); CTTN (involved in signaling); or TUBA1 and TUBB (microtubule subunits). Binds directly F-actin and regulates actin cytoskeletal structure through its F-actin-bundling activity. Involved in the regulation of cell adhesion and motility through phosphorylation of key regulators of these processes such as CRK, CRKL or DOK1. Required for adhesion-dependent phosphorylation of ARHGAP35 which promotes its association with RASA1, resulting in recruitment of ARHGAP35 to the cell periphery where it inhibits RHO. Phosphorylates multiple receptor tyrosine kinases like PDGFRB and other substrates which are involved in endocytosis regulation such as RIN1. In brain, may regulate neurotransmission by phosphorylating proteins at the synapse. Finally, functions as its own regulator through autocatalytic activity as well as through phosphorylation of its inhibitor, ABI1. Positively regulates chemokine-mediated T-cell migration, polarization, and homing to lymph nodes and immune-challenged tissues, potentially via activation of NEDD9/HEF1 and RAP1. In Mus musculus (Mouse), this protein is Tyrosine-protein kinase ABL2.